The following is a 358-amino-acid chain: MAATLGSGERWTEAYIDAVRRNKYPEDTPPESHDPCGCCNCVKAQKEKKSENEWTQTRQGEGSSMYSEEQLLGVQRIKKCRNYYEILGVSRDASDEELKKAYRKLALKFHPDKNCAPGATDAFKAIGNAFAVLSNPDKRLRYDEYGDEQVTFTAPRARPYNYYRDFEADITPEELSNVFFGGHFPTGNIHMFSNVTDDAHYYRRRHRHERTQTQKEEEEEKPQTTYSAFIQLLPVLVIVIISVITQLLATNPPYSLFYKSTLGYTISRETQNLQVPYFVDKNFDKAYRGASLHDLEKTIEKDYIDYIRTSCWKEKQQKSELTNLAGLYRDERLKQKAESLKLENCEKLSKLIGLRRGG.

The J domain maps to 82-146; it reads NYYEILGVSR…DKRLRYDEYG (65 aa). A helical transmembrane segment spans residues 228–248; the sequence is AFIQLLPVLVIVIISVITQLL.

Its subcellular location is the endoplasmic reticulum membrane. This chain is DnaJ homolog subfamily C member 18 (DNAJC18), found in Macaca fascicularis (Crab-eating macaque).